The sequence spans 722 residues: uncharacterized protein (722 aa).

Active-site charge relay system residues include S575, D658, and H691.

The protein belongs to the peptidase S9B family.

This is an uncharacterized protein from Rickettsia prowazekii (strain Madrid E).